A 214-amino-acid chain; its full sequence is Small ribosomal subunit protein uS5 (214 aa).

The segment at 1-61 (MTDSSPQSNP…QERDSEWQER (61 aa)) is disordered. The segment covering 9–29 (NPNAVPGAADVPAAAEGQQQQ) has biased composition (low complexity). The span at 30–60 (EQRRGRGDRDGRRGDRRGGRRGQERDSEWQE) shows a compositional bias: basic and acidic residues. The S5 DRBM domain maps to 58-121 (WQERVVQIRR…ADGKKHLVKV (64 aa)).

This sequence belongs to the universal ribosomal protein uS5 family. Part of the 30S ribosomal subunit. Contacts proteins S4 and S8.

With S4 and S12 plays an important role in translational accuracy. In terms of biological role, located at the back of the 30S subunit body where it stabilizes the conformation of the head with respect to the body. This chain is Small ribosomal subunit protein uS5, found in Synechococcus sp. (strain CC9605).